A 553-amino-acid chain; its full sequence is Formate--tetrahydrofolate ligase (553 aa).

Position 56-63 (56-63) interacts with ATP; sequence TPKGEGKT.

The protein belongs to the formate--tetrahydrofolate ligase family.

It catalyses the reaction (6S)-5,6,7,8-tetrahydrofolate + formate + ATP = (6R)-10-formyltetrahydrofolate + ADP + phosphate. It participates in one-carbon metabolism; tetrahydrofolate interconversion. This Haloarcula marismortui (strain ATCC 43049 / DSM 3752 / JCM 8966 / VKM B-1809) (Halobacterium marismortui) protein is Formate--tetrahydrofolate ligase.